The primary structure comprises 202 residues: Pyridoxal 5'-phosphate synthase subunit PdxT (202 aa).

Residue glycine 49–serine 51 coordinates L-glutamine. The active-site Nucleophile is the cysteine 81. Residues arginine 110 and isoleucine 139–arginine 140 each bind L-glutamine. Catalysis depends on charge relay system residues histidine 182 and glutamate 184.

This sequence belongs to the glutaminase PdxT/SNO family. In the presence of PdxS, forms a dodecamer of heterodimers. Only shows activity in the heterodimer.

The enzyme catalyses aldehydo-D-ribose 5-phosphate + D-glyceraldehyde 3-phosphate + L-glutamine = pyridoxal 5'-phosphate + L-glutamate + phosphate + 3 H2O + H(+). It catalyses the reaction L-glutamine + H2O = L-glutamate + NH4(+). It functions in the pathway cofactor biosynthesis; pyridoxal 5'-phosphate biosynthesis. Its function is as follows. Catalyzes the hydrolysis of glutamine to glutamate and ammonia as part of the biosynthesis of pyridoxal 5'-phosphate. The resulting ammonia molecule is channeled to the active site of PdxS. The protein is Pyridoxal 5'-phosphate synthase subunit PdxT of Rhodococcus jostii (strain RHA1).